Here is an 84-residue protein sequence, read N- to C-terminus: Putative defensin-like protein 139 (84 aa).

A signal peptide spans 1–28 (MEPSNQIFFYLRRSKLLSGLGEIRMAKG). 4 cysteine pairs are disulfide-bonded: cysteine 37/cysteine 81, cysteine 46/cysteine 65, cysteine 51/cysteine 75, and cysteine 55/cysteine 77.

The protein belongs to the DEFL family.

The protein resides in the secreted. The polypeptide is Putative defensin-like protein 139 (LCR7) (Arabidopsis thaliana (Mouse-ear cress)).